Here is a 656-residue protein sequence, read N- to C-terminus: Receptor-type tyrosine-protein phosphatase R (656 aa).

Positions 1–23 (MRRAVGFPALCLLLNLHAAGCFS) are cleaved as a signal peptide. S23 carries O-linked (Xyl...) (chondroitin sulfate) serine glycosylation. The Extracellular segment spans residues 24–226 (RNNDHFLAIR…EADKIWSKEG (203 aa)). N-linked (GlcNAc...) asparagine glycosylation occurs at N128. The chain crosses the membrane as a helical span at residues 227–247 (FYAVVIFLSIFIIIVTCLMII). Topologically, residues 248–656 (YRLKERLQLS…ESRLSPETVE (409 aa)) are cytoplasmic. A disordered region spans residues 269-289 (HLSPIARQQAQSEAKTTHSMV). Phosphoserine is present on S271. Positions 274–289 (ARQQAQSEAKTTHSMV) are enriched in polar residues. The residue at position 338 (S338) is a Phosphoserine; by PKA. The Tyrosine-protein phosphatase domain maps to 392-646 (LQSEFMEIPM…EFVHHALCLF (255 aa)). Substrate contacts are provided by residues D553, 587–593 (CSAGIGR), and Q631. Residue C587 is the Phosphocysteine intermediate of the active site.

It belongs to the protein-tyrosine phosphatase family. Receptor class 7 subfamily. In terms of assembly, interacts with MAPKs. As to expression, expressed in the heart, brain, spleen, lung, liver, skeletal muscle, kidney and testis. Isoform alpha is expressed throughout the granular layer of the cerebellar but not within the Purkinje cells, also in the villi of the ileum and jejunum and both the villi and crypts of the duodenum. Isoform beta is expressed only in the Purkinje cells. Isoform gamma is expressed throughout the brain, the villi and crypts of the duodenum, jejunum and ileum and expressed at low levels in the proximal colon.

The protein localises to the cell membrane. It localises to the cytoplasm. The enzyme catalyses O-phospho-L-tyrosyl-[protein] + H2O = L-tyrosyl-[protein] + phosphate. Functionally, sequesters mitogen-activated protein kinases (MAPKs) such as MAPK1, MAPK3 and MAPK14 in the cytoplasm in an inactive form. The MAPKs bind to a dephosphorylated kinase interacting motif, phosphorylation of which by the protein kinase A complex releases the MAPKs for activation and translocation into the nucleus. Isoform gamma may have a role in patterning and cellular proliferation of skeletal elements in the precartilaginous/cartilaginous skeleton. This Mus musculus (Mouse) protein is Receptor-type tyrosine-protein phosphatase R (Ptprr).